Here is a 237-residue protein sequence, read N- to C-terminus: Maternal B9.10 protein (237 aa).

The protein belongs to the BTG family.

In Xenopus laevis (African clawed frog), this protein is Maternal B9.10 protein.